The sequence spans 550 residues: Hydroxylamine reductase (550 aa).

4 residues coordinate [2Fe-2S] cluster: cysteine 3, cysteine 6, cysteine 18, and cysteine 25. Residues histidine 249, glutamate 273, cysteine 317, cysteine 405, cysteine 433, cysteine 458, glutamate 492, and lysine 494 each contribute to the hybrid [4Fe-2O-2S] cluster site. Cysteine 405 carries the post-translational modification Cysteine persulfide.

The protein belongs to the HCP family. It depends on [2Fe-2S] cluster as a cofactor. Requires hybrid [4Fe-2O-2S] cluster as cofactor.

It is found in the cytoplasm. It catalyses the reaction A + NH4(+) + H2O = hydroxylamine + AH2 + H(+). Its function is as follows. Catalyzes the reduction of hydroxylamine to form NH(3) and H(2)O. This Escherichia coli (strain SMS-3-5 / SECEC) protein is Hydroxylamine reductase.